Consider the following 844-residue polypeptide: Protein translocase subunit SecA (844 aa).

ATP contacts are provided by residues glutamine 89, 107 to 111, and aspartate 497; that span reads GEGKT. Zn(2+) is bound by residues cysteine 829, cysteine 831, cysteine 840, and histidine 841.

Belongs to the SecA family. Monomer and homodimer. Part of the essential Sec protein translocation apparatus which comprises SecA, SecYEG and auxiliary proteins SecDF. Other proteins may also be involved. Zn(2+) is required as a cofactor.

It localises to the cell membrane. It is found in the cytoplasm. It carries out the reaction ATP + H2O + cellular proteinSide 1 = ADP + phosphate + cellular proteinSide 2.. In terms of biological role, part of the Sec protein translocase complex. Interacts with the SecYEG preprotein conducting channel. Has a central role in coupling the hydrolysis of ATP to the transfer of proteins into and across the cell membrane, serving as an ATP-driven molecular motor driving the stepwise translocation of polypeptide chains across the membrane. In Streptococcus suis (strain 98HAH33), this protein is Protein translocase subunit SecA.